Here is a 263-residue protein sequence, read N- to C-terminus: Imidazole glycerol phosphate synthase subunit HisF (263 aa).

Catalysis depends on residues Asp-22 and Asp-141.

This sequence belongs to the HisA/HisF family. In terms of assembly, heterodimer of HisH and HisF.

The protein resides in the cytoplasm. The enzyme catalyses 5-[(5-phospho-1-deoxy-D-ribulos-1-ylimino)methylamino]-1-(5-phospho-beta-D-ribosyl)imidazole-4-carboxamide + L-glutamine = D-erythro-1-(imidazol-4-yl)glycerol 3-phosphate + 5-amino-1-(5-phospho-beta-D-ribosyl)imidazole-4-carboxamide + L-glutamate + H(+). Its pathway is amino-acid biosynthesis; L-histidine biosynthesis; L-histidine from 5-phospho-alpha-D-ribose 1-diphosphate: step 5/9. Functionally, IGPS catalyzes the conversion of PRFAR and glutamine to IGP, AICAR and glutamate. The HisF subunit catalyzes the cyclization activity that produces IGP and AICAR from PRFAR using the ammonia provided by the HisH subunit. The protein is Imidazole glycerol phosphate synthase subunit HisF of Clavibacter michiganensis subsp. michiganensis (strain NCPPB 382).